A 117-amino-acid chain; its full sequence is G antigen 12B/C/D/E (117 aa).

The interval 1–117 (MSWRGRSTYY…PEEGEKQSQC (117 aa)) is disordered. Acidic residues-rich tracts occupy residues 32 to 45 (FSDEVEPATPEEGE) and 87 to 96 (ECEDGPDGQE). Residues 103–117 (EEVKTPEEGEKQSQC) are compositionally biased toward basic and acidic residues.

The protein belongs to the GAGE family.

The protein is G antigen 12B/C/D/E (GAGE12B) of Homo sapiens (Human).